The primary structure comprises 229 residues: Peptidase E (229 aa).

Catalysis depends on charge relay system residues Ser-120, Asp-135, and His-157.

The protein belongs to the peptidase S51 family.

The protein localises to the cytoplasm. The catalysed reaction is Dipeptidase E catalyzes the hydrolysis of dipeptides Asp-|-Xaa. It does not act on peptides with N-terminal Glu, Asn or Gln, nor does it cleave isoaspartyl peptides.. Hydrolyzes dipeptides containing N-terminal aspartate residues. May play a role in allowing the cell to use peptide aspartate to spare carbon otherwise required for the synthesis of the aspartate family of amino acids. The sequence is that of Peptidase E from Shigella boydii serotype 18 (strain CDC 3083-94 / BS512).